We begin with the raw amino-acid sequence, 285 residues long: HTH-type transcriptional regulator MurR (285 aa).

Residues 1–77 (MLYLTKIRNA…MALIGEYSAS (77 aa)) enclose the HTH rpiR-type domain. Positions 37–56 (SRKMAKQLGISQSSIVKFAQ) form a DNA-binding region, H-T-H motif. Residues 128–268 (IIEVISKAPF…FVGLVQLNDV (141 aa)) enclose the SIS domain.

As to quaternary structure, homotetramer.

Its pathway is amino-sugar metabolism; N-acetylmuramate degradation [regulation]. In terms of biological role, represses the expression of the murPQ operon involved in the uptake and degradation of N-acetylmuramic acid (MurNAc). Binds to two adjacent inverted repeats within the operator region. MurNAc 6-phosphate, the substrate of MurQ, is the specific inducer that weakens binding of MurR to the operator. In Escherichia coli O9:H4 (strain HS), this protein is HTH-type transcriptional regulator MurR.